We begin with the raw amino-acid sequence, 283 residues long: Elongation factor Ts (283 aa).

The segment at T80–V83 is involved in Mg(2+) ion dislocation from EF-Tu.

This sequence belongs to the EF-Ts family.

Its subcellular location is the cytoplasm. Associates with the EF-Tu.GDP complex and induces the exchange of GDP to GTP. It remains bound to the aminoacyl-tRNA.EF-Tu.GTP complex up to the GTP hydrolysis stage on the ribosome. This chain is Elongation factor Ts, found in Actinobacillus pleuropneumoniae serotype 3 (strain JL03).